The following is a 589-amino-acid chain: GTPase LSG1-2 (589 aa).

Positions 1–26 (MGKSEKTSLGRSLVKHHNHMIQESKD) are disordered. In terms of domain architecture, CP-type G spans 158-366 (WRQLWRVLER…LCDCPGLVFP (209 aa)). A DARXP motif motif is present at residues 176–180 (DARDP). The tract at residues 206–209 (NKAD) is G4. 206-209 (NKAD) contributes to the GTP binding site. The segment at 237-239 (AAT) is G5. The interval 315–322 (GYPNVGKS) is G1. A GTP-binding site is contributed by 318-323 (NVGKSS). Residues 341 to 345 (GKTKH) are G2. A G3 region spans residues 359–362 (DCPG). G362 lines the GTP pocket. Residues 495–509 (GSESDDSAVGDETEN) are compositionally biased toward acidic residues. Disordered regions lie at residues 495 to 515 (GSESDDSAVGDETENEQVPGI) and 534 to 589 (SKKV…LTMR). The Nuclear localization signal motif lies at 534–541 (SKKVTAKK). The span at 534–558 (SKKVTAKKQTASHKQHKKPQRKKDR) shows a compositional bias: basic residues. The span at 580 to 589 (PANTGPLTMR) shows a compositional bias: polar residues.

Belongs to the TRAFAC class YlqF/YawG GTPase family. In terms of tissue distribution, ubiquitous, with the highest expression in reproductive and strongly dividing tissues.

Its subcellular location is the cytoplasm. The protein resides in the nucleus. Functionally, GTPase involved in ribosome biogenesis. Binds to 23S rRNA and associates with 60S pre-ribosomes. Involved in early cotyledon and leaf development. The chain is GTPase LSG1-2 from Arabidopsis thaliana (Mouse-ear cress).